Reading from the N-terminus, the 239-residue chain is Serine protease SplC (239 aa).

An N-terminal signal peptide occupies residues 1 to 36 (MNKNIVIKSMAALAILTSVTGINAAVVEETQQIANA). Residues His-75, Asp-113, and Ser-193 each act as charge relay system in the active site.

The protein belongs to the peptidase S1B family.

It localises to the secreted. In Staphylococcus aureus (strain USA300 / TCH1516), this protein is Serine protease SplC (splC).